A 676-amino-acid chain; its full sequence is UvrABC system protein B (676 aa).

In terms of domain architecture, Helicase ATP-binding spans 26-414; that stretch reads EGLDAGLAHQ…SAGEIADQVV (389 aa). Residue 39–46 participates in ATP binding; the sequence is GVTGSGKT. The Beta-hairpin motif lies at 92–115; the sequence is YYDYYQPEAYVPTTDTFIEKDASV. Residues 432–598 form the Helicase C-terminal domain; the sequence is QVDDLLSEIR…ALKRNIKDIM (167 aa). The 36-residue stretch at 636-671 folds into the UVR domain; the sequence is EKEISRLEAAMYQHAQDLEFELAAEKRDEIEKLRAQ.

It belongs to the UvrB family. As to quaternary structure, forms a heterotetramer with UvrA during the search for lesions. Interacts with UvrC in an incision complex.

The protein resides in the cytoplasm. In terms of biological role, the UvrABC repair system catalyzes the recognition and processing of DNA lesions. A damage recognition complex composed of 2 UvrA and 2 UvrB subunits scans DNA for abnormalities. Upon binding of the UvrA(2)B(2) complex to a putative damaged site, the DNA wraps around one UvrB monomer. DNA wrap is dependent on ATP binding by UvrB and probably causes local melting of the DNA helix, facilitating insertion of UvrB beta-hairpin between the DNA strands. Then UvrB probes one DNA strand for the presence of a lesion. If a lesion is found the UvrA subunits dissociate and the UvrB-DNA preincision complex is formed. This complex is subsequently bound by UvrC and the second UvrB is released. If no lesion is found, the DNA wraps around the other UvrB subunit that will check the other stand for damage. This is UvrABC system protein B from Vibrio parahaemolyticus serotype O3:K6 (strain RIMD 2210633).